A 142-amino-acid polypeptide reads, in one-letter code: Small ribosomal subunit protein uS12 (142 aa).

Belongs to the universal ribosomal protein uS12 family. Part of the 30S ribosomal subunit.

Its function is as follows. With S4 and S5 plays an important role in translational accuracy. Located at the interface of the 30S and 50S subunits. This is Small ribosomal subunit protein uS12 from Methanoculleus marisnigri (strain ATCC 35101 / DSM 1498 / JR1).